Consider the following 142-residue polypeptide: Large ribosomal subunit protein uL13 (142 aa).

It belongs to the universal ribosomal protein uL13 family. As to quaternary structure, part of the 50S ribosomal subunit.

This protein is one of the early assembly proteins of the 50S ribosomal subunit, although it is not seen to bind rRNA by itself. It is important during the early stages of 50S assembly. This Syntrophotalea carbinolica (strain DSM 2380 / NBRC 103641 / GraBd1) (Pelobacter carbinolicus) protein is Large ribosomal subunit protein uL13.